Here is a 150-residue protein sequence, read N- to C-terminus: Phosphoribosyl-AMP cyclohydrolase (150 aa).

D93 lines the Mg(2+) pocket. C94 lines the Zn(2+) pocket. Residues D95 and D97 each coordinate Mg(2+). Zn(2+) contacts are provided by C112 and C119.

It belongs to the PRA-CH family. As to quaternary structure, homodimer. It depends on Mg(2+) as a cofactor. Zn(2+) serves as cofactor.

It localises to the cytoplasm. The catalysed reaction is 1-(5-phospho-beta-D-ribosyl)-5'-AMP + H2O = 1-(5-phospho-beta-D-ribosyl)-5-[(5-phospho-beta-D-ribosylamino)methylideneamino]imidazole-4-carboxamide. Its pathway is amino-acid biosynthesis; L-histidine biosynthesis; L-histidine from 5-phospho-alpha-D-ribose 1-diphosphate: step 3/9. In terms of biological role, catalyzes the hydrolysis of the adenine ring of phosphoribosyl-AMP. In Rhizobium leguminosarum bv. trifolii (strain WSM2304), this protein is Phosphoribosyl-AMP cyclohydrolase.